A 780-amino-acid chain; its full sequence is Aconitate hydratase, mitochondrial (780 aa).

The transit peptide at 1–27 directs the protein to the mitochondrion; that stretch reads MAPYSLLVTRLQKALGVRQYHVASVLC. Lysine 31 bears the N6-succinyllysine mark. Lysine 50 carries the N6-acetyllysine; alternate modification. Lysine 50 carries the post-translational modification N6-succinyllysine; alternate. Glutamine 99 contacts substrate. An N6-acetyllysine; alternate mark is found at lysine 138 and lysine 144. Lysine 138 and lysine 144 each carry N6-succinyllysine; alternate. 192–194 provides a ligand contact to substrate; that stretch reads DSH. An N6-acetyllysine; alternate modification is found at lysine 233. Lysine 233 is subject to N6-succinyllysine; alternate. Cysteine 385 is a [4Fe-4S] cluster binding site. Position 411 is an N6-succinyllysine (lysine 411). [4Fe-4S] cluster contacts are provided by cysteine 448 and cysteine 451. Substrate contacts are provided by arginine 474 and arginine 479. A compositionally biased stretch (basic and acidic residues) spans 528 to 537; the sequence is DADELPKGEF. The tract at residues 528–560 is disordered; sequence DADELPKGEFDPGQDTYQHPPKDSSGQHVDVSP. Residue lysine 549 is modified to N6-succinyllysine. Polar residues predominate over residues 551–560; sequence SSGQHVDVSP. The residue at position 559 (serine 559) is a Phosphoserine. An N6-acetyllysine; alternate modification is found at lysine 573. Lysine 573 bears the N6-succinyllysine; alternate mark. Residues lysine 577 and lysine 591 each carry the N6-succinyllysine modification. Position 605 is an N6-acetyllysine; alternate (lysine 605). Residue lysine 605 is modified to N6-succinyllysine; alternate. Arginine 607 contributes to the substrate binding site. N6-succinyllysine is present on lysine 628. Serine 670 is modified (phosphoserine). 670 to 671 is a substrate binding site; sequence SR. Lysine 689 carries the post-translational modification N6-succinyllysine. 2 positions are modified to N6-acetyllysine; alternate: lysine 723 and lysine 730. 2 positions are modified to N6-succinyllysine; alternate: lysine 723 and lysine 730. N6-acetyllysine occurs at positions 736, 739, and 743.

It belongs to the aconitase/IPM isomerase family. Monomer. It depends on [4Fe-4S] cluster as a cofactor. In terms of processing, forms covalent cross-links mediated by transglutaminase TGM2, between a glutamine and the epsilon-amino group of a lysine residue, forming homopolymers and heteropolymers.

It is found in the mitochondrion. The enzyme catalyses citrate = D-threo-isocitrate. Its pathway is carbohydrate metabolism; tricarboxylic acid cycle; isocitrate from oxaloacetate: step 2/2. In terms of biological role, catalyzes the isomerization of citrate to isocitrate via cis-aconitate. This is Aconitate hydratase, mitochondrial (ACO2) from Homo sapiens (Human).